The primary structure comprises 358 residues: MAQVELKQVRKTYPNGAEAIFGVDMKIDDGELIVFVGPSGCGKSTLLRMVAGLESISSGEILIGDRVINDVSPSERDVAMVFQNYALYPHMSVRGNMSYGLKNRKMDKEEIERRITDAATMLKIDQFLDRQPNQLSGGQRQRVAMGRAIVRHPQVFLFDEPLSNLDAKLRVQMRIEIKKLQRRMNVTSIYVTHDQTEAMTLADRLAVINEGQIEQMGAPMELYSNPATLFVASFIGAPQINLIPVAFDGSAIVNGDLRIGGFSDLPMGVDLKLGVRPDVMTIDPEGQVMMNVDIVEQHGGENLIYGTIDGVFSGEGEPQEVCLKGSQTLLPNPDDKLRLRFDPDAAFIFRTDTGERLK.

An ABC transporter domain is found at 4 to 235 (VELKQVRKTY…PATLFVASFI (232 aa)). 37–44 (GPSGCGKS) is a binding site for ATP.

The protein belongs to the ABC transporter superfamily. sn-glycerol-3-phosphate importer (TC 3.A.1.1.3) family. The complex is composed of two ATP-binding proteins (UgpC), two transmembrane proteins (UgpA and UgpE) and a solute-binding protein (UgpB).

It is found in the cell inner membrane. It catalyses the reaction sn-glycerol 3-phosphate(out) + ATP + H2O = sn-glycerol 3-phosphate(in) + ADP + phosphate + H(+). Its function is as follows. Part of the ABC transporter complex UgpBAEC involved in sn-glycerol-3-phosphate (G3P) import. Responsible for energy coupling to the transport system. The polypeptide is sn-glycerol-3-phosphate import ATP-binding protein UgpC (Roseobacter denitrificans (strain ATCC 33942 / OCh 114) (Erythrobacter sp. (strain OCh 114))).